A 141-amino-acid polypeptide reads, in one-letter code: Small ribosomal subunit protein bS6 (141 aa).

The disordered stretch occupies residues 97-141 (TGQSEMLKAEENRSERRERRDRPEHADSADGDDSDNSDASDNADE). Over residues 103-124 (LKAEENRSERRERRDRPEHADS) the composition is skewed to basic and acidic residues. Positions 125–141 (ADGDDSDNSDASDNADE) are enriched in acidic residues.

It belongs to the bacterial ribosomal protein bS6 family.

In terms of biological role, binds together with bS18 to 16S ribosomal RNA. The chain is Small ribosomal subunit protein bS6 from Pseudomonas fluorescens (strain ATCC BAA-477 / NRRL B-23932 / Pf-5).